The following is a 139-amino-acid chain: D-ribose pyranase (139 aa).

Residue His20 is the Proton donor of the active site. Substrate contacts are provided by residues Asp28, His106, and 128–130; that span reads YAN.

Belongs to the RbsD / FucU family. RbsD subfamily. Homodecamer.

It localises to the cytoplasm. The enzyme catalyses beta-D-ribopyranose = beta-D-ribofuranose. It functions in the pathway carbohydrate metabolism; D-ribose degradation; D-ribose 5-phosphate from beta-D-ribopyranose: step 1/2. Its function is as follows. Catalyzes the interconversion of beta-pyran and beta-furan forms of D-ribose. This Actinobacillus succinogenes (strain ATCC 55618 / DSM 22257 / CCUG 43843 / 130Z) protein is D-ribose pyranase.